A 213-amino-acid polypeptide reads, in one-letter code: Skin granule protein (213 aa).

An N-terminal signal peptide occupies residues 1–26; sequence METMYHRFLCIPFLLILGLAQGQSKG. A run of 3 repeats spans residues 27 to 48, 49 to 70, and 71 to 92. The 4 X 22 AA approximate tandem repeats stretch occupies residues 27–104; the sequence is LQTVTTFRTG…PIATFQTGVQ (78 aa). The 4; truncated repeat unit spans residues 93–104; the sequence is LQPIATFQTGVQ. The segment at 162-213 is disordered; the sequence is WHGGRNGHKMKKLGKKKHHKNRHGGKNHHKMKKIGKHHGGGRKFGKKHRHHK. Positions 166–213 are enriched in basic residues; that stretch reads RNGHKMKKLGKKKHHKNRHGGKNHHKMKKIGKHHGGGRKFGKKHRHHK.

The protein resides in the secreted. This chain is Skin granule protein (sgp), found in Xenopus laevis (African clawed frog).